A 287-amino-acid polypeptide reads, in one-letter code: Glucose uptake protein GlcU (287 aa).

Helical transmembrane passes span Leu-4 to Gly-26, Ala-38 to Val-60, Trp-110 to Leu-132, Ile-153 to Val-175, Ala-180 to Tyr-197, Ile-210 to Gln-227, Val-232 to Leu-254, and Arg-261 to Ala-283.

The protein belongs to the GRP transporter (TC 2.A.7.5) family.

It is found in the cell membrane. Involved in the uptake of glucose. This chain is Glucose uptake protein GlcU (glcU), found in Bacillus subtilis (strain 168).